The chain runs to 463 residues: Cysteine--tRNA ligase (463 aa).

C28 provides a ligand contact to Zn(2+). Residues 30 to 40 (ITIYDLCHIGH) carry the 'HIGH' region motif. 3 residues coordinate Zn(2+): C209, H234, and E238. The 'KMSKS' region motif lies at 266-270 (KMSKS). K269 is an ATP binding site.

The protein belongs to the class-I aminoacyl-tRNA synthetase family. In terms of assembly, monomer. Requires Zn(2+) as cofactor.

Its subcellular location is the cytoplasm. It catalyses the reaction tRNA(Cys) + L-cysteine + ATP = L-cysteinyl-tRNA(Cys) + AMP + diphosphate. The sequence is that of Cysteine--tRNA ligase from Proteus mirabilis (strain HI4320).